The chain runs to 101 residues: NADH-quinone oxidoreductase subunit K (101 aa).

3 helical membrane passes run 4–24, 30–50, and 61–81; these read LAHY…GIFL, IIIL…FVAF, and IFVF…LAIL.

It belongs to the complex I subunit 4L family. NDH-1 is composed of 14 different subunits. Subunits NuoA, H, J, K, L, M, N constitute the membrane sector of the complex.

The protein localises to the cell inner membrane. It carries out the reaction a quinone + NADH + 5 H(+)(in) = a quinol + NAD(+) + 4 H(+)(out). NDH-1 shuttles electrons from NADH, via FMN and iron-sulfur (Fe-S) centers, to quinones in the respiratory chain. The immediate electron acceptor for the enzyme in this species is believed to be ubiquinone. Couples the redox reaction to proton translocation (for every two electrons transferred, four hydrogen ions are translocated across the cytoplasmic membrane), and thus conserves the redox energy in a proton gradient. The sequence is that of NADH-quinone oxidoreductase subunit K from Paraburkholderia xenovorans (strain LB400).